The following is a 194-amino-acid chain: Amidophosphoribosyltransferase (194 aa).

A propeptide spanning residues 1-11 (MPHEPKGLNEE) is cleaved from the precursor. Catalysis depends on Cys12, which acts as the Nucleophile. The Glutamine amidotransferase type-2 domain maps to 12–194 (CGVFGVWGNP…PHGFRPMVVG (183 aa)).

In the C-terminal section; belongs to the purine/pyrimidine phosphoribosyltransferase family.

It catalyses the reaction 5-phospho-beta-D-ribosylamine + L-glutamate + diphosphate = 5-phospho-alpha-D-ribose 1-diphosphate + L-glutamine + H2O. Its pathway is purine metabolism; IMP biosynthesis via de novo pathway; N(1)-(5-phospho-D-ribosyl)glycinamide from 5-phospho-alpha-D-ribose 1-diphosphate: step 1/2. Catalyzes the formation of phosphoribosylamine from phosphoribosylpyrophosphate (PRPP) and glutamine. This chain is Amidophosphoribosyltransferase, found in Lacticaseibacillus casei (Lactobacillus casei).